A 245-amino-acid polypeptide reads, in one-letter code: CTD nuclear envelope phosphatase 1B (245 aa).

A helical transmembrane segment spans residues 7–29; it reads CLLGVRTFHGVTSRIWSFFLYIL. Residues 58–225 form the FCP1 homology domain; it reads NNVKRKILVL…LNLLPMLDAL (168 aa).

It belongs to the dullard family.

It is found in the endoplasmic reticulum membrane. The protein localises to the nucleus membrane. It catalyses the reaction O-phospho-L-seryl-[protein] + H2O = L-seryl-[protein] + phosphate. The enzyme catalyses O-phospho-L-threonyl-[protein] + H2O = L-threonyl-[protein] + phosphate. In terms of biological role, serine/threonine protein phosphatase that may dephosphorylate and activate lipins. Lipins are phosphatidate phosphatases that catalyze the conversion of phosphatidic acid to diacylglycerol and control the metabolism of fatty acids at different levels. May indirectly modulate the lipid composition of nuclear and/or endoplasmic reticulum membranes and be required for proper nuclear membrane morphology and/or dynamics. May also indirectly regulate the production of lipid droplets and triacylglycerol. May antagonize BMP signaling. The polypeptide is CTD nuclear envelope phosphatase 1B (ctdnep1b) (Danio rerio (Zebrafish)).